The sequence spans 117 residues: Large ribosomal subunit protein bL20c (117 aa).

It belongs to the bacterial ribosomal protein bL20 family.

It is found in the plastid. Its subcellular location is the chloroplast. Its function is as follows. Binds directly to 23S ribosomal RNA and is necessary for the in vitro assembly process of the 50S ribosomal subunit. It is not involved in the protein synthesizing functions of that subunit. The sequence is that of Large ribosomal subunit protein bL20c from Drimys granadensis.